The sequence spans 757 residues: Polyribonucleotide nucleotidyltransferase (757 aa).

2 residues coordinate Mg(2+): Asp482 and Asp488. One can recognise a KH domain in the interval 549-608 (PRMLSFYIDKDKISAAIGSKGKNIRSVCERSNAKIEIGDDGKVSVFATSGTEAEIAKSMM). The S1 motif domain maps to 618 to 686 (GSIVDVKVVR…KGGCPKLSRR (69 aa)). Residues 703–714 (EERKDGPNDRDN) show a composition bias toward basic and acidic residues. The interval 703–757 (EERKDGPNDRDNYYNNSFSRKPGGSHHKRPPRPRSGFSNRNRPKFGNNDSSSGFY) is disordered. A compositionally biased stretch (basic residues) spans 725–734 (GGSHHKRPPR).

Belongs to the polyribonucleotide nucleotidyltransferase family. Mg(2+) serves as cofactor.

The protein localises to the cytoplasm. The catalysed reaction is RNA(n+1) + phosphate = RNA(n) + a ribonucleoside 5'-diphosphate. Functionally, involved in mRNA degradation. Catalyzes the phosphorolysis of single-stranded polyribonucleotides processively in the 3'- to 5'-direction. The polypeptide is Polyribonucleotide nucleotidyltransferase (Wolbachia sp. subsp. Drosophila simulans (strain wRi)).